A 422-amino-acid polypeptide reads, in one-letter code: Glucuronoxylanase XynC (422 aa).

The first 32 residues, 1–32, serve as a signal peptide directing secretion; it reads MIPRIKKTICVLLVCFTMLSVMLGPGATEVLA. The Proton donor role is filled by E171. Catalysis depends on E260, which acts as the Nucleophile.

Belongs to the glycosyl hydrolase 30 family.

It is found in the secreted. The enzyme catalyses Endohydrolysis of (1-&gt;4)-beta-D-xylosyl links in some glucuronoarabinoxylans.. It participates in glycan degradation; xylan degradation. Functionally, catalyzes the depolymerization of methylglucuronoxylan (MeGAXn) from different sources. It cleaves the beta-1,4-xylosidic bond penultimate to that linking carbon one of the xylose residue substituted with alpha-1,2-linked 4-O-methyl-D-glucuronate (MeGA). In Bacillus subtilis (strain 168), this protein is Glucuronoxylanase XynC (xynC).